Consider the following 238-residue polypeptide: Glutamine amidotransferase-like protein chyE (238 aa).

Residues lysine 8 to glutamate 238 enclose the Glutamine amidotransferase type-1 domain. Cysteine 102 functions as the Nucleophile in the catalytic mechanism. Residues histidine 189 and glutamate 191 contribute to the active site.

It belongs to the peptidase C26 family.

Its pathway is pigment biosynthesis. In terms of biological role, glutamine amidotransferase-like protein; part of the gene cluster that mediates the biosynthesis of the yellow pigment chrysogine. the NRPS chyA mediates the condensation of anthranilic acid and alanine into the intermediate 2-(2-aminopropanamido)benzoic acid. The remainder of the pathway is highly branched yielding at least 13 chrysogine-related compounds. The malonyl transferase chyE converts 2-(2-aminopropanamido)benzoic acid and 2-(2-aminopropanamido)benzamidine into 2-(2-(2-carboxyacetamido)propanamido)benzoic acid and 3-((1-((2-carbamoylphenyl)amino)-1-oxopropan-2-yl)amino)-3-oxopropanoic acid, respectively. ChyD is an amidase, being responsible for the amidation of the carboxylic acid moiety of 2-(2-aminopropanamido)benzoic acid, 2-(2-(2-carboxyacetamido)propanamido)benzoic acid and 2-(2-((4-amino-1-carboxy-4-oxobutyl)amino)propanamido)benzoic acid. ChyC is involved in the same reactions as ChyD, but plays a more minor role in the amidation reactions compared to chyD. The oxidoreductases chyH and chyM are involved in oxidation reactions that form N-pyruvoylanthranilamide from 2-(2-aminopropanamido)benzamidine and (1-((2-carbamoylphenyl)amino)-1-oxopropan-2-yl)glutamine, respectively. N-pyruvoylanthranilamide is further converted via two further branches in the pathway, yielding chrysogine and additional chrysogine-related coumpounds. Chrysogine is likely formed by a spontaneous ring closure from N-pyruvoylanthranilamide. The chain is Glutamine amidotransferase-like protein chyE from Penicillium rubens (strain ATCC 28089 / DSM 1075 / NRRL 1951 / Wisconsin 54-1255) (Penicillium chrysogenum).